Reading from the N-terminus, the 225-residue chain is Endonuclease V (225 aa).

Positions 43 and 110 each coordinate Mg(2+).

The protein belongs to the endonuclease V family. It depends on Mg(2+) as a cofactor.

It localises to the cytoplasm. The catalysed reaction is Endonucleolytic cleavage at apurinic or apyrimidinic sites to products with a 5'-phosphate.. In terms of biological role, DNA repair enzyme involved in the repair of deaminated bases. Selectively cleaves double-stranded DNA at the second phosphodiester bond 3' to a deoxyinosine leaving behind the intact lesion on the nicked DNA. The chain is Endonuclease V from Thermotoga sp. (strain RQ2).